Reading from the N-terminus, the 199-residue chain is Inactive glutathione S-transferase D3 (199 aa).

The 64-residue stretch at 1–64 (MVGKALGLEF…YLVEKYGKDD (64 aa)) folds into the GST N-terminal domain. Residues 34-36 (HSI) and 48-50 (ESR) contribute to the glutathione site. The 130-residue stretch at 70-199 (DIQKQAVINQ…RIEEKQNAAK (130 aa)) folds into the GST C-terminal domain.

Belongs to the GST superfamily. Delta family. Homodimer.

In terms of biological role, has no glutathione S-transferase activity. In Drosophila melanogaster (Fruit fly), this protein is Inactive glutathione S-transferase D3.